A 163-amino-acid polypeptide reads, in one-letter code: uncharacterized protein (163 aa).

Positions 7–162 constitute an N-acetyltransferase domain; that stretch reads ISISAVKLPQ…NVVYMRLEMS (156 aa).

This sequence belongs to the acetyltransferase family.

The protein localises to the cytoplasm. The protein resides in the nucleus. This is an uncharacterized protein from Schizosaccharomyces pombe (strain 972 / ATCC 24843) (Fission yeast).